The chain runs to 314 residues: Vacuolar membrane protein VL3_4134 (314 aa).

Residues 32–60 (KPTSSVVSETSSKSLPSLTSSAFSTSSGA) are disordered. The chain crosses the membrane as a helical span at residues 93–113 (VYIAVGAVIGAIFISILIWWL). Ser148, Ser254, and Ser274 each carry phosphoserine. Residues 240 to 309 (EERKLNLNRP…PSMFLDDVLN (70 aa)) are disordered. Basic and acidic residues predominate over residues 254 to 269 (SPERKEKKINSMEGYH).

This sequence belongs to the PRM5 family.

It is found in the vacuole membrane. This chain is Vacuolar membrane protein VL3_4134, found in Saccharomyces cerevisiae (strain Zymaflore VL3) (Baker's yeast).